A 383-amino-acid polypeptide reads, in one-letter code: Glutaminyl-peptide cyclotransferase-like protein (383 aa).

Residues 1–25 (MPSGGRGRPRLQVGERSLLERPSPP) form a disordered region. The chain crosses the membrane as a helical span at residues 35 to 57 (LLPQLLLALTVASVFYTIWRIWH). A disulfide bridge links Cys-168 with Cys-192. Residue Asp-187 coordinates Zn(2+). The Proton acceptor role is filled by Glu-226. Residue Glu-227 participates in Zn(2+) binding. The active-site Proton acceptor is the Asp-270. Residue His-352 coordinates Zn(2+).

This sequence belongs to the glutaminyl-peptide cyclotransferase family.

The protein localises to the golgi apparatus membrane. It catalyses the reaction N-terminal L-glutaminyl-[peptide] = N-terminal 5-oxo-L-prolyl-[peptide] + NH4(+). In terms of biological role, responsible for the biosynthesis of pyroglutamyl peptides. This chain is Glutaminyl-peptide cyclotransferase-like protein (QPCTL), found in Bos taurus (Bovine).